Reading from the N-terminus, the 110-residue chain is Phosphoribosyl-ATP pyrophosphatase (110 aa).

The protein belongs to the PRA-PH family.

Its subcellular location is the cytoplasm. It catalyses the reaction 1-(5-phospho-beta-D-ribosyl)-ATP + H2O = 1-(5-phospho-beta-D-ribosyl)-5'-AMP + diphosphate + H(+). The protein operates within amino-acid biosynthesis; L-histidine biosynthesis; L-histidine from 5-phospho-alpha-D-ribose 1-diphosphate: step 2/9. This is Phosphoribosyl-ATP pyrophosphatase from Clostridium novyi (strain NT).